Here is a 156-residue protein sequence, read N- to C-terminus: Small ribosomal subunit protein uS7c (156 aa).

This sequence belongs to the universal ribosomal protein uS7 family. Part of the 30S ribosomal subunit.

It localises to the plastid. It is found in the cyanelle. One of the primary rRNA binding proteins, it binds directly to 16S rRNA where it nucleates assembly of the head domain of the 30S subunit. The chain is Small ribosomal subunit protein uS7c (rps7) from Cyanophora paradoxa.